The primary structure comprises 592 residues: Aspartate--tRNA(Asp/Asn) ligase (592 aa).

Residue glutamate 175 coordinates L-aspartate. Positions 199–202 (QLFK) are aspartate. L-aspartate is bound at residue arginine 221. ATP is bound by residues 221-223 (RDE) and glutamine 230. Residue histidine 450 coordinates L-aspartate. Glutamate 483 serves as a coordination point for ATP. L-aspartate is bound at residue arginine 490. An ATP-binding site is contributed by 535 to 538 (GLDR).

It belongs to the class-II aminoacyl-tRNA synthetase family. Type 1 subfamily. Homodimer.

The protein localises to the cytoplasm. The catalysed reaction is tRNA(Asx) + L-aspartate + ATP = L-aspartyl-tRNA(Asx) + AMP + diphosphate. In terms of biological role, aspartyl-tRNA synthetase with relaxed tRNA specificity since it is able to aspartylate not only its cognate tRNA(Asp) but also tRNA(Asn). Reaction proceeds in two steps: L-aspartate is first activated by ATP to form Asp-AMP and then transferred to the acceptor end of tRNA(Asp/Asn). This is Aspartate--tRNA(Asp/Asn) ligase from Acinetobacter baumannii (strain AB307-0294).